The primary structure comprises 696 residues: Polyribonucleotide nucleotidyltransferase (696 aa).

Residues Asp-486 and Asp-492 each contribute to the Mg(2+) site. A KH domain is found at 553–612 (PRITQKQIPKDRIGELIGPGGKMIRAIIEQSGSEISVDDSGKVTIASPSEESKEKAIAMI). One can recognise an S1 motif domain in the interval 622-690 (GKIYDGVIKR…KMGKIDLSRK (69 aa)).

This sequence belongs to the polyribonucleotide nucleotidyltransferase family. The cofactor is Mg(2+).

It is found in the cytoplasm. The enzyme catalyses RNA(n+1) + phosphate = RNA(n) + a ribonucleoside 5'-diphosphate. Functionally, involved in mRNA degradation. Catalyzes the phosphorolysis of single-stranded polyribonucleotides processively in the 3'- to 5'-direction. The sequence is that of Polyribonucleotide nucleotidyltransferase from Leptospira biflexa serovar Patoc (strain Patoc 1 / ATCC 23582 / Paris).